The sequence spans 256 residues: Thiazole synthase (256 aa).

Lysine 96 functions as the Schiff-base intermediate with DXP in the catalytic mechanism. 1-deoxy-D-xylulose 5-phosphate is bound by residues glycine 157, 184–185 (AG), and 206–207 (NT).

It belongs to the ThiG family. In terms of assembly, homotetramer. Forms heterodimers with either ThiH or ThiS.

It localises to the cytoplasm. The catalysed reaction is [ThiS sulfur-carrier protein]-C-terminal-Gly-aminoethanethioate + 2-iminoacetate + 1-deoxy-D-xylulose 5-phosphate = [ThiS sulfur-carrier protein]-C-terminal Gly-Gly + 2-[(2R,5Z)-2-carboxy-4-methylthiazol-5(2H)-ylidene]ethyl phosphate + 2 H2O + H(+). It functions in the pathway cofactor biosynthesis; thiamine diphosphate biosynthesis. Catalyzes the rearrangement of 1-deoxy-D-xylulose 5-phosphate (DXP) to produce the thiazole phosphate moiety of thiamine. Sulfur is provided by the thiocarboxylate moiety of the carrier protein ThiS. In vitro, sulfur can be provided by H(2)S. In Brucella suis (strain ATCC 23445 / NCTC 10510), this protein is Thiazole synthase.